The primary structure comprises 148 residues: UPF0134 protein MPN_204 (148 aa).

This sequence belongs to the UPF0134 family.

The sequence is that of UPF0134 protein MPN_204 from Mycoplasma pneumoniae (strain ATCC 29342 / M129 / Subtype 1) (Mycoplasmoides pneumoniae).